Here is a 368-residue protein sequence, read N- to C-terminus: MAGERRDSKAAAFFCLAWALCLALPGFPQHVGGREDRADWTQEKYSHRPTILNATSILQVTSQTNVNRMWQNDLHPILIERYPGSPGSYAVRQHIKHRLQGLQAGWLVEEDTFQSHTPYGYRTFSNIISTLNPLAKRHLVVACHYDSKYFLPQLDGKVFVGATDSAVPCAMMLELARSLDRQLSFLKQSSLPPKADLSLKLIFFDGEEAFVRWSPSDSLYGSRSLAQKMASTPHPPGARNTNQIQGIDLFVLLDLIGARNPVFPVYFLNTARWFGRLEAIEQSLHDLGLLNNYSSERQYFRSNIRRYPVEDDHIPFLRRGVPILHLIPSPFPRVWHTMEDNEENLDKPTIDNISKILQVFVLEYLNLG.

The signal sequence occupies residues methionine 1 to alanine 23. N-linked (GlcNAc...) asparagine glycosylation is present at asparagine 53. Cysteine 143 and cysteine 169 are joined by a disulfide. Zn(2+) is bound at residue aspartate 164. Glutamate 207 (proton acceptor) is an active-site residue. Glutamate 208 contributes to the Zn(2+) binding site. The Proton acceptor role is filled by aspartate 254. The N-linked (GlcNAc...) asparagine glycan is linked to asparagine 292. Position 336 (histidine 336) interacts with Zn(2+). Asparagine 352 carries an N-linked (GlcNAc...) asparagine glycan.

The protein belongs to the glutaminyl-peptide cyclotransferase family. As to expression, expressed by the venom gland.

The protein localises to the secreted. It catalyses the reaction N-terminal L-glutaminyl-[peptide] = N-terminal 5-oxo-L-prolyl-[peptide] + NH4(+). In terms of biological role, responsible for the biosynthesis of pyroglutamyl peptides. Has a bias against acidic and tryptophan residues adjacent to the N-terminal glutaminyl residue and a lack of importance of chain length after the second residue. Also catalyzes N-terminal pyroglutamate formation. The chain is Glutaminyl-peptide cyclotransferase (QPCT) from Boiga dendrophila (Mangrove snake).